Here is a 55-residue protein sequence, read N- to C-terminus: uncharacterized protein (55 aa).

Residues 24–46 traverse the membrane as a helical segment; it reads LFIIFFTYSYYYCGFLQSFNYII.

The protein resides in the membrane. This is an uncharacterized protein from Dictyostelium discoideum (Social amoeba).